Here is a 575-residue protein sequence, read N- to C-terminus: Proline--tRNA ligase (575 aa).

It belongs to the class-II aminoacyl-tRNA synthetase family. ProS type 1 subfamily. In terms of assembly, homodimer.

Its subcellular location is the cytoplasm. The catalysed reaction is tRNA(Pro) + L-proline + ATP = L-prolyl-tRNA(Pro) + AMP + diphosphate. In terms of biological role, catalyzes the attachment of proline to tRNA(Pro) in a two-step reaction: proline is first activated by ATP to form Pro-AMP and then transferred to the acceptor end of tRNA(Pro). As ProRS can inadvertently accommodate and process non-cognate amino acids such as alanine and cysteine, to avoid such errors it has two additional distinct editing activities against alanine. One activity is designated as 'pretransfer' editing and involves the tRNA(Pro)-independent hydrolysis of activated Ala-AMP. The other activity is designated 'posttransfer' editing and involves deacylation of mischarged Ala-tRNA(Pro). The misacylated Cys-tRNA(Pro) is not edited by ProRS. This is Proline--tRNA ligase from Solidesulfovibrio magneticus (strain ATCC 700980 / DSM 13731 / RS-1) (Desulfovibrio magneticus).